We begin with the raw amino-acid sequence, 181 residues long: Adenine phosphoribosyltransferase (181 aa).

The protein belongs to the purine/pyrimidine phosphoribosyltransferase family. Homodimer.

It is found in the cytoplasm. It catalyses the reaction AMP + diphosphate = 5-phospho-alpha-D-ribose 1-diphosphate + adenine. It functions in the pathway purine metabolism; AMP biosynthesis via salvage pathway; AMP from adenine: step 1/1. Catalyzes a salvage reaction resulting in the formation of AMP, that is energically less costly than de novo synthesis. This chain is Adenine phosphoribosyltransferase, found in Chromohalobacter salexigens (strain ATCC BAA-138 / DSM 3043 / CIP 106854 / NCIMB 13768 / 1H11).